Here is a 117-residue protein sequence, read N- to C-terminus: uncharacterized protein (117 aa).

This is an uncharacterized protein from Pasteurella multocida (strain Pm70).